Reading from the N-terminus, the 422-residue chain is Enolase (422 aa).

Gln161 lines the (2R)-2-phosphoglycerate pocket. Catalysis depends on Glu203, which acts as the Proton donor. Positions 240, 283, and 310 each coordinate Mg(2+). (2R)-2-phosphoglycerate-binding residues include Lys335, Arg364, Ser365, and Lys386. The active-site Proton acceptor is the Lys335.

This sequence belongs to the enolase family. Mg(2+) serves as cofactor.

The protein localises to the cytoplasm. The protein resides in the secreted. It is found in the cell surface. It carries out the reaction (2R)-2-phosphoglycerate = phosphoenolpyruvate + H2O. Its pathway is carbohydrate degradation; glycolysis; pyruvate from D-glyceraldehyde 3-phosphate: step 4/5. Its function is as follows. Catalyzes the reversible conversion of 2-phosphoglycerate (2-PG) into phosphoenolpyruvate (PEP). It is essential for the degradation of carbohydrates via glycolysis. This Deinococcus geothermalis (strain DSM 11300 / CIP 105573 / AG-3a) protein is Enolase.